Consider the following 195-residue polypeptide: Putative CheY-P phosphatase CheC1 (195 aa).

This sequence belongs to the CheC family.

Its function is as follows. Catalyzes the dephosphorylation of CheY-P. The chain is Putative CheY-P phosphatase CheC1 (cheC1) from Halobacterium salinarum (strain ATCC 29341 / DSM 671 / R1).